The sequence spans 170 residues: uncharacterized protein (170 aa).

A helical membrane pass occupies residues 7–27; that stretch reads LVELLIGLAIISIALNFAVPL.

The protein localises to the membrane. This is an uncharacterized protein from Haemophilus influenzae (strain ATCC 51907 / DSM 11121 / KW20 / Rd).